The following is a 776-amino-acid chain: Isoamylase (776 aa).

An N-terminal signal peptide occupies residues 1-26; sequence MKCPKILAALLGCAVLAGVPAMPAHA. Residues aspartate 154, glutamate 255, threonine 256, asparagine 258, and aspartate 285 each contribute to the Ca(2+) site. Aspartate 401 functions as the Nucleophile in the catalytic mechanism. The cysteines at positions 410 and 422 are disulfide-linked. Glutamate 461 serves as the catalytic Proton donor. 2 cysteine pairs are disulfide-bonded: cysteine 546–cysteine 616 and cysteine 738–cysteine 766.

It belongs to the glycosyl hydrolase 13 family. Monomer. Requires Ca(2+) as cofactor.

It catalyses the reaction Hydrolysis of (1-&gt;6)-alpha-D-glucosidic branch linkages in glycogen, amylopectin and their beta-limit dextrins.. The polypeptide is Isoamylase (iam) (Pseudomonas sp. (strain SMP1)).